A 343-amino-acid polypeptide reads, in one-letter code: UDP-3-O-acylglucosamine N-acyltransferase (343 aa).

The Proton acceptor role is filled by His245.

The protein belongs to the transferase hexapeptide repeat family. LpxD subfamily. Homotrimer.

The catalysed reaction is a UDP-3-O-[(3R)-3-hydroxyacyl]-alpha-D-glucosamine + a (3R)-hydroxyacyl-[ACP] = a UDP-2-N,3-O-bis[(3R)-3-hydroxyacyl]-alpha-D-glucosamine + holo-[ACP] + H(+). It participates in bacterial outer membrane biogenesis; LPS lipid A biosynthesis. In terms of biological role, catalyzes the N-acylation of UDP-3-O-acylglucosamine using 3-hydroxyacyl-ACP as the acyl donor. Is involved in the biosynthesis of lipid A, a phosphorylated glycolipid that anchors the lipopolysaccharide to the outer membrane of the cell. The protein is UDP-3-O-acylglucosamine N-acyltransferase of Phenylobacterium zucineum (strain HLK1).